A 335-amino-acid polypeptide reads, in one-letter code: 3-hydroxy-3-methylglutaryl-CoA lyase, cytoplasmic (335 aa).

Gly-2 is lipidated: N-myristoyl glycine. In terms of domain architecture, Pyruvate carboxyltransferase spans 43-310 (VKIVEVGPRD…ETGVDLLKVM (268 aa)). Position 51 (Arg-51) interacts with substrate. Asp-52 contacts a divalent metal cation. Lys-58 carries the post-translational modification N6-acetyllysine. The a divalent metal cation site is built by His-243 and His-245. Cys-276 is an active-site residue. Residue Asn-285 coordinates a divalent metal cation.

This sequence belongs to the HMG-CoA lyase family. A divalent metal cation serves as cofactor.

It localises to the cytoplasm. Its subcellular location is the cytosol. It is found in the endoplasmic reticulum membrane. The catalysed reaction is (3S)-3-hydroxy-3-methylglutaryl-CoA = acetoacetate + acetyl-CoA. Its pathway is metabolic intermediate metabolism; (S)-3-hydroxy-3-methylglutaryl-CoA degradation; acetoacetate from (S)-3-hydroxy-3-methylglutaryl-CoA: step 1/1. Non-mitochondrial 3-hydroxy-3-methylglutaryl-CoA lyase that catalyzes a cation-dependent cleavage of (S)-3-hydroxy-3-methylglutaryl-CoA into acetyl-CoA and acetoacetate, a key step in ketogenesis, the products of which support energy production in nonhepatic animal tissues. This chain is 3-hydroxy-3-methylglutaryl-CoA lyase, cytoplasmic (hmgcll1), found in Danio rerio (Zebrafish).